The primary structure comprises 163 residues: Disulfide bond formation protein B (163 aa).

Residues 1–9 (MKKLTYRKI) lie on the Cytoplasmic side of the membrane. A helical transmembrane segment spans residues 10–26 (QSFQAIITVLVIFASFY). Residues 27–44 (LEYAAGLQPCPLCLMQRV) lie on the Periplasmic side of the membrane. An intrachain disulfide couples Cys-36 to Cys-39. Residues 45–58 (CVFILLGLMGVSLG) traverse the membrane as a helical segment. Residues 59 to 64 (TVKKAH) lie on the Cytoplasmic side of the membrane. Residues 65-82 (IVSLIQFQVACAGLYFSL) form a helical membrane-spanning segment. Residues 83–139 (RQLWLQSLPSDQAPACMPGLDVLIQYFPWQTVAKALFWGAGDCAEVTWTMFGVSMPG) are Periplasmic-facing. An intrachain disulfide couples Cys-98 to Cys-125. A helical transmembrane segment spans residues 140–158 (WAAMYFLSMAIMGLFLFFR). The Cytoplasmic segment spans residues 159–163 (TRTIN).

The protein belongs to the DsbB family.

Its subcellular location is the cell inner membrane. Its function is as follows. Required for disulfide bond formation in some periplasmic proteins. Acts by oxidizing the DsbA protein. The chain is Disulfide bond formation protein B from Legionella pneumophila (strain Lens).